The chain runs to 124 residues: uncharacterized protein (124 aa).

A helical transmembrane segment spans residues 70–90 (LLYLALVLLLVVILSTAFFSI).

The protein localises to the membrane. This is an uncharacterized protein from Saccharomyces cerevisiae (strain ATCC 204508 / S288c) (Baker's yeast).